Here is a 93-residue protein sequence, read N- to C-terminus: Putative protein adenylyltransferase MJ0435 (93 aa).

The short motif at 26–40 (GSYARNEQKETSDID) is the GSX(10)DXD motif element. Positions 38, 40, and 70 each coordinate Mg(2+).

Belongs to the MntA antitoxin family. Probably forms a complex with cognate toxin MJ0434. The cofactor is Mg(2+).

The catalysed reaction is L-tyrosyl-[protein] + ATP = O-(5'-adenylyl)-L-tyrosyl-[protein] + diphosphate. It catalyses the reaction O-(5'-adenylyl)-L-tyrosyl-[protein] + ATP = O-[5'-(adenylyl-(5'-&gt;3')-adenylyl)]-L-tyrosyl-[protein] + diphosphate. In terms of biological role, probable antitoxin component of a putative type VII toxin-antitoxin (TA) system. Neutralizes cognate toxic MJ0434 by di-AMPylation. The polypeptide is Putative protein adenylyltransferase MJ0435 (Methanocaldococcus jannaschii (strain ATCC 43067 / DSM 2661 / JAL-1 / JCM 10045 / NBRC 100440) (Methanococcus jannaschii)).